A 571-amino-acid chain; its full sequence is UvrABC system protein C (571 aa).

A GIY-YIG domain is found at 15–93 (TSPGVYLWKD…IDRYNPEFNI (79 aa)). Positions 184–219 (NNYINELTNKMHQAANNMQFELALFLRDGLTYLKKL) constitute a UVR domain.

Belongs to the UvrC family. Interacts with UvrB in an incision complex.

It is found in the cytoplasm. Its function is as follows. The UvrABC repair system catalyzes the recognition and processing of DNA lesions. UvrC both incises the 5' and 3' sides of the lesion. The N-terminal half is responsible for the 3' incision and the C-terminal half is responsible for the 5' incision. In Mycoplasmopsis bovis (strain ATCC 25523 / DSM 22781 / NCTC 10131 / PG45) (Mycoplasma bovis), this protein is UvrABC system protein C.